A 416-amino-acid polypeptide reads, in one-letter code: MDYDFKVKLTGERERVEDLFEYEGCKVGRGTYGHVYKAKRKDGKDDRDYALKQIEGTGISMSACREIALLRELKHPNVISLQKVFLSHADRKVWLLFDFAEHDLWHIIKFHRASKANKKPVQLPRGMVKSLLYQILDGIHYLHANWVLHRDLKPANILVMGEGPERGRVKIADMGFARLFNSPLKPLADLDPVVVTFWYRAPELLLGARHYTKAIDKDWEDIKKMPEHSTLIKDFRRNTYTNCSLIKYMEKHKVKPDSKTFHLLQKLLTMDPIKRISSEQAMQDPYFLEDPLPTSDVFAGCQIPYPKREFLTEEEPDDKGDKKNQQQQQGNNHTNGTGHPGNQDNSHAQGPPLKKVRVVPPTTTSGGLIMTSDYQRSNPHAAYQNPGPSTSQPQSSMGYTSTSQQPPQYSHQTHRY.

The interval 1–15 (MDYDFKVKLTGERER) is interaction with CCNC. Residues 21–287 (EYEGCKVGRG…SEQAMQDPYF (267 aa)) form the Protein kinase domain. Residues 27–35 (VGRGTYGHV) and Lys52 each bind ATP. The active-site Proton acceptor is the Asp151. Positions 313–416 (EEEPDDKGDK…PQYSHQTHRY (104 aa)) are disordered. Positions 325 to 343 (QQQQQGNNHTNGTGHPGNQ) are enriched in low complexity. Composition is skewed to polar residues over residues 361–378 (PTTT…QRSN) and 386–416 (PGPS…THRY).

Belongs to the protein kinase superfamily. CMGC Ser/Thr protein kinase family. CDC2/CDKX subfamily. In terms of assembly, component of the Mediator complex. Interacts with ccnc. Mg(2+) is required as a cofactor.

It is found in the nucleus. The enzyme catalyses L-seryl-[protein] + ATP = O-phospho-L-seryl-[protein] + ADP + H(+). The catalysed reaction is L-threonyl-[protein] + ATP = O-phospho-L-threonyl-[protein] + ADP + H(+). It carries out the reaction [DNA-directed RNA polymerase] + ATP = phospho-[DNA-directed RNA polymerase] + ADP + H(+). Component of the Mediator complex, a coactivator involved in regulated gene transcription of nearly all RNA polymerase II-dependent genes. Mediator functions as a bridge to convey information from gene-specific regulatory proteins to the basal RNA polymerase II transcription machinery. Mediator is recruited to promoters by direct interactions with regulatory proteins and serves as a scaffold for the assembly of a functional pre-initiation complex with RNA polymerase II and the general transcription factors. Phosphorylates the CTD (C-terminal domain) of the large subunit of RNA polymerase II (RNAp II), which may inhibit the formation of a transcription initiation complex. The polypeptide is Cyclin-dependent kinase 8 (cdk8) (Xenopus laevis (African clawed frog)).